A 453-amino-acid chain; its full sequence is Collagen alpha-4(IV) chain (453 aa).

The tract at residues 1 to 218 (GPPGPPGAPG…PPGPMGDPGP (218 aa)) is disordered. The triple-helical region stretch occupies residues 1–222 (GPPGPPGAPG…MGDPGPIGFG (222 aa)). Pro residues-rich tracts occupy residues 26 to 44 (QGPPGPDGPRGVPGPPGPP), 60 to 72 (PGPPGLPGPPGPP), and 95 to 122 (PQGPPGSPGPPGDKGLPGPPGRRGPLGP). Positions 153 to 162 (PEGTMGLPGM) are enriched in low complexity. A compositionally biased stretch (basic and acidic residues) spans 174 to 183 (PGLDGRRGED). Pro residues predominate over residues 206–215 (APGPPGPMGD). The region spanning 228-453 (GFLLVLHSQT…SRCQVCVKHS (226 aa)) is the Collagen IV NC1 domain. Cystine bridges form between C243–C332, C276–C329, C288–C294, C351–C449, C385–C446, and C397–C404.

This sequence belongs to the type IV collagen family. As to quaternary structure, there are six type IV collagen isoforms, alpha 1(IV)-alpha 6(IV), each of which can form a triple helix structure with 2 other chains to generate type IV collagen network. The alpha 3(IV) chain forms a triple helical protomer with alpha 4(IV) and alpha 5(IV); this triple helical structure dimerizes through NC1-NC1 domain interactions such that the alpha 3(IV), alpha 4(IV) and alpha 5(IV) chains of one protomer connect with the alpha 5(IV), alpha 4(IV) and alpha 3(IV) chains of the opposite protomer, respectively. Associates with LAMB2 at the neuromuscular junction and in GBM. Prolines at the third position of the tripeptide repeating unit (G-X-Y) are hydroxylated in some or all of the chains. In terms of processing, type IV collagens contain numerous cysteine residues which are involved in inter- and intramolecular disulfide bonding. 12 of these, located in the NC1 domain, are conserved in all known type IV collagens. Post-translationally, the trimeric structure of the NC1 domains is stabilized by covalent bonds between Lys and Met residues. As to expression, alpha 3 and alpha 4 type IV collagens are colocalized and present only in basement membranes of kidney, eye, cochlea, lung and brain.

The protein localises to the secreted. It localises to the extracellular space. The protein resides in the extracellular matrix. It is found in the basement membrane. Its function is as follows. Type IV collagen is the major structural component of glomerular basement membranes (GBM), forming a 'chicken-wire' meshwork together with laminins, proteoglycans and entactin/nidogen. The polypeptide is Collagen alpha-4(IV) chain (COL4A4) (Bos taurus (Bovine)).